The primary structure comprises 556 residues: 2-succinyl-5-enolpyruvyl-6-hydroxy-3-cyclohexene-1-carboxylate synthase (556 aa).

It belongs to the TPP enzyme family. MenD subfamily. Homodimer. The cofactor is Mg(2+). Requires Mn(2+) as cofactor. Thiamine diphosphate is required as a cofactor.

It carries out the reaction isochorismate + 2-oxoglutarate + H(+) = 5-enolpyruvoyl-6-hydroxy-2-succinyl-cyclohex-3-ene-1-carboxylate + CO2. Its pathway is quinol/quinone metabolism; 1,4-dihydroxy-2-naphthoate biosynthesis; 1,4-dihydroxy-2-naphthoate from chorismate: step 2/7. The protein operates within quinol/quinone metabolism; menaquinone biosynthesis. In terms of biological role, catalyzes the thiamine diphosphate-dependent decarboxylation of 2-oxoglutarate and the subsequent addition of the resulting succinic semialdehyde-thiamine pyrophosphate anion to isochorismate to yield 2-succinyl-5-enolpyruvyl-6-hydroxy-3-cyclohexene-1-carboxylate (SEPHCHC). In Salmonella paratyphi B (strain ATCC BAA-1250 / SPB7), this protein is 2-succinyl-5-enolpyruvyl-6-hydroxy-3-cyclohexene-1-carboxylate synthase.